A 119-amino-acid chain; its full sequence is DNA-binding protein inhibitor ID-3 (119 aa).

The bHLH domain maps to 28–80; the sequence is RGKSPAAEEPLSLLDDMNHCYSRLRELVPGVPRGTQLSQVEILQRVIDYILDL.

Homodimer, and heterodimer with other HLH proteins. Interacts with COPS5 and COPS7A. Interacts with IFI204. Interacts with GATA4 and NKX2-5. Interacts with ANKRD2; both proteins cooperate in myoblast differentiation. Interacts with CLOCK and BMAL1.

The protein resides in the nucleus. Its function is as follows. Transcriptional regulator (lacking a basic DNA binding domain) which negatively regulates the basic helix-loop-helix (bHLH) transcription factors by forming heterodimers and inhibiting their DNA binding and transcriptional activity. Implicated in regulating a variety of cellular processes, including cellular growth, senescence, differentiation, apoptosis, angiogenesis, and neoplastic transformation. Involved in myogenesis by inhibiting skeletal muscle and cardiac myocyte differentiation and promoting muscle precursor cells proliferation. Inhibits the binding of E2A-containing protein complexes to muscle creatine kinase E-box enhancer. Regulates the circadian clock by repressing the transcriptional activator activity of the CLOCK-BMAL1 heterodimer. The sequence is that of DNA-binding protein inhibitor ID-3 (ID3) from Bos taurus (Bovine).